A 283-amino-acid polypeptide reads, in one-letter code: Pseudokinase OPG198 (283 aa).

The ATP site is built by methionine 1 and lysine 30. Positions 1 to 283 (MESFKYCFDN…DRLRRLFIQD (283 aa)) constitute a Protein kinase domain.

Belongs to the protein kinase superfamily. Ser/Thr protein kinase family. Poxviruses subfamily. Interacts with B1/VPK1. Interacts with host VRK1. Interacts with host VRK2.

It localises to the host nucleus. Its activity is regulated as follows. Both catalytically active kinases B1/VPK1 and host VRK2 repress B12 inhibitory activity in a B1/VPK1 deletion mutant strain. Functionally, pseudokinase that plays a role in viral DNA replication repression by activating the antiviral protein BANF1 and inhibiting the activity of host VRK1, a cellular modulator of BANF1. The sequence is that of Pseudokinase OPG198 (OPG198) from Homo sapiens (Human).